Here is a 412-residue protein sequence, read N- to C-terminus: MSYIEKTDPELFEAIKKEAERQEYKLNLIASENYASKAVMEAQGSILTNKYAEGYSGKRYYGGCDFVDIAEDLAIARAKKIFNAGYVNVQPHSGSGANMAVYFSVLKPGDTIMSMDLSHGGHLSHGSPVSFSGKLFNIVPYGVSKKTEMLDYSELMKKAKENKPQMIVCGASAYPREIDFKQFREIADEVGAYLLADIAHIAGLVVAGVHPSPVPYADFVTSTTHKTLRGPRGGIIISKTEELATRINKAVFPGLQGGPLMHIIAGKAVAFKEAMSEKFKQDQVQTVKNAKTLCKCLKEKGFDMVSGDTDNHLMLVNLNNMNITGKDAEAALSKAGIIANKNTVPFETRSPFITSGVRLGTPACTTRGMKETEMELIADYIETAITNSENDKILSETSDKVRELCSRFPVYC.

(6S)-5,6,7,8-tetrahydrofolate contacts are provided by residues leucine 117 and 121-123 (GHL). Lysine 226 is subject to N6-(pyridoxal phosphate)lysine. Residues glutamate 242 and 350-352 (SPF) contribute to the (6S)-5,6,7,8-tetrahydrofolate site.

This sequence belongs to the SHMT family. Homodimer. The cofactor is pyridoxal 5'-phosphate.

It localises to the cytoplasm. It catalyses the reaction (6R)-5,10-methylene-5,6,7,8-tetrahydrofolate + glycine + H2O = (6S)-5,6,7,8-tetrahydrofolate + L-serine. The protein operates within one-carbon metabolism; tetrahydrofolate interconversion. It participates in amino-acid biosynthesis; glycine biosynthesis; glycine from L-serine: step 1/1. Catalyzes the reversible interconversion of serine and glycine with tetrahydrofolate (THF) serving as the one-carbon carrier. Appears to be specific for THF as the pteridine substrate, since the use of tetrahydromethanopterin (H4MPT) is much less efficient. Also exhibits THF-independent aldolase activity toward beta-hydroxyamino acids, producing glycine and aldehydes, via a retro-aldol mechanism. Thus, is able to catalyze the cleavage of L-allo-threonine and L-threo-beta-phenylserine. This is Serine hydroxymethyltransferase from Methanosarcina barkeri (strain Fusaro / DSM 804).